A 442-amino-acid chain; its full sequence is tRNA modification GTPase MnmE (442 aa).

(6S)-5-formyl-5,6,7,8-tetrahydrofolate contacts are provided by R27, E84, and K124. Residues 221-366 (GLHVVIVGAP…LLDALQAFAE (146 aa)) enclose the TrmE-type G domain. Residues 231-236 (NAGKSS), 250-256 (SEEAGTT), and 275-278 (DTAG) each bind GTP. S235 and T256 together coordinate Mg(2+). Position 442 (K442) interacts with (6S)-5-formyl-5,6,7,8-tetrahydrofolate.

It belongs to the TRAFAC class TrmE-Era-EngA-EngB-Septin-like GTPase superfamily. TrmE GTPase family. As to quaternary structure, homodimer. Heterotetramer of two MnmE and two MnmG subunits. K(+) is required as a cofactor.

It localises to the cytoplasm. In terms of biological role, exhibits a very high intrinsic GTPase hydrolysis rate. Involved in the addition of a carboxymethylaminomethyl (cmnm) group at the wobble position (U34) of certain tRNAs, forming tRNA-cmnm(5)s(2)U34. This Brucella suis (strain ATCC 23445 / NCTC 10510) protein is tRNA modification GTPase MnmE.